Here is a 90-residue protein sequence, read N- to C-terminus: Small ribosomal subunit protein uS15 (90 aa).

Belongs to the universal ribosomal protein uS15 family. In terms of assembly, part of the 30S ribosomal subunit. Forms a bridge to the 50S subunit in the 70S ribosome, contacting the 23S rRNA.

Its function is as follows. One of the primary rRNA binding proteins, it binds directly to 16S rRNA where it helps nucleate assembly of the platform of the 30S subunit by binding and bridging several RNA helices of the 16S rRNA. Forms an intersubunit bridge (bridge B4) with the 23S rRNA of the 50S subunit in the ribosome. This is Small ribosomal subunit protein uS15 from Herpetosiphon aurantiacus (strain ATCC 23779 / DSM 785 / 114-95).